Consider the following 228-residue polypeptide: Glycerol-3-phosphate acyltransferase (228 aa).

The next 6 membrane-spanning stretches (helical) occupy residues 1-21 (MINWLVLNAVILIVAYLLGAT), 56-76 (VPALVVLVIDIFKGALAIALV), 104-124 (MVIIAGLIAIVGHTKSIWIGF), 136-156 (ILLAISWVVGLGTLSVFIVVL), 161-181 (IVSLSSIIAAISVSGLMFFTG), and 183-203 (PLPYQIFAITGGIYVIWRHIS).

This sequence belongs to the PlsY family. In terms of assembly, probably interacts with PlsX.

The protein resides in the cell inner membrane. It catalyses the reaction an acyl phosphate + sn-glycerol 3-phosphate = a 1-acyl-sn-glycero-3-phosphate + phosphate. Its pathway is lipid metabolism; phospholipid metabolism. Its function is as follows. Catalyzes the transfer of an acyl group from acyl-phosphate (acyl-PO(4)) to glycerol-3-phosphate (G3P) to form lysophosphatidic acid (LPA). This enzyme utilizes acyl-phosphate as fatty acyl donor, but not acyl-CoA or acyl-ACP. This Trichodesmium erythraeum (strain IMS101) protein is Glycerol-3-phosphate acyltransferase.